A 108-amino-acid polypeptide reads, in one-letter code: Kanamycin resistance protein (108 aa).

Residues 1–99 (SRTLLLERGR…PAVYMVQTRQ (99 aa)) form the N-acetyltransferase domain.

The polypeptide is Kanamycin resistance protein (Rhizobium radiobacter (Agrobacterium tumefaciens)).